The sequence spans 78 residues: UPF0612 protein new22 (78 aa).

Belongs to the UPF0612 family.

This chain is UPF0612 protein new22 (new22), found in Schizosaccharomyces pombe (strain 972 / ATCC 24843) (Fission yeast).